Consider the following 195-residue polypeptide: dTDP-4-dehydrorhamnose 3,5-epimerase (195 aa).

Residues Arg-31, Glu-36, 54–56 (QDN), and Arg-67 contribute to the substrate site. The Proton acceptor role is filled by His-70. Substrate contacts are provided by Lys-80 and His-127. The active-site Proton donor is Tyr-140. Positions 151 and 176 each coordinate substrate.

The protein belongs to the dTDP-4-dehydrorhamnose 3,5-epimerase family. In terms of assembly, homodimer.

The enzyme catalyses dTDP-4-dehydro-6-deoxy-alpha-D-glucose = dTDP-4-dehydro-beta-L-rhamnose. Its pathway is carbohydrate biosynthesis; dTDP-L-rhamnose biosynthesis. Its function is as follows. Catalyzes the epimerization of the C3' and C5'positions of dTDP-6-deoxy-D-xylo-4-hexulose, forming dTDP-6-deoxy-L-lyxo-4-hexulose. The polypeptide is dTDP-4-dehydrorhamnose 3,5-epimerase (Sinorhizobium fredii (strain NBRC 101917 / NGR234)).